The sequence spans 744 residues: Probable ubiquitin carboxyl-terminal hydrolase MINDY-4 (744 aa).

Phosphoserine is present on residues Ser143, Ser220, and Ser224. Residues 211–358 are disordered; the sequence is GMMAGPVASS…QLVSDRTDDK (148 aa). Over residues 265–277 the composition is skewed to low complexity; it reads VPDSSSDSVSRSP. Polar residues predominate over residues 290-299; sequence NVTSSSQGLS. The residue at position 295 (Ser295) is a Phosphoserine. Residues 300–310 are compositionally biased toward basic and acidic residues; it reads QRDRPRLRSVS. Cys443 functions as the Nucleophile in the catalytic mechanism. His664 (proton acceptor) is an active-site residue.

The protein belongs to the MINDY deubiquitinase family. FAM188 subfamily.

It catalyses the reaction Thiol-dependent hydrolysis of ester, thioester, amide, peptide and isopeptide bonds formed by the C-terminal Gly of ubiquitin (a 76-residue protein attached to proteins as an intracellular targeting signal).. In terms of biological role, probable hydrolase that can remove 'Lys-48'-linked conjugated ubiquitin from proteins. This chain is Probable ubiquitin carboxyl-terminal hydrolase MINDY-4 (Mindy4), found in Mus musculus (Mouse).